Reading from the N-terminus, the 318-residue chain is Protein-methionine-sulfoxide reductase catalytic subunit MsrP (318 aa).

Positions 1-40 (MNRFTRYDVTPEAIFNQRRQIIKAMGLGAAALSLPNIGFA) form a signal peptide, tat-type signal. Mo-molybdopterin is bound by residues Asn72, 75 to 76 (YE), Cys130, Thr165, Asn217, Arg222, and 233 to 235 (SIK).

Belongs to the MsrP family. In terms of assembly, heterodimer of a catalytic subunit (MsrP) and a heme-binding subunit (MsrQ). The cofactor is Mo-molybdopterin. Post-translationally, predicted to be exported by the Tat system. The position of the signal peptide cleavage has not been experimentally proven.

The protein resides in the periplasm. The enzyme catalyses L-methionyl-[protein] + a quinone + H2O = L-methionyl-(S)-S-oxide-[protein] + a quinol. The catalysed reaction is L-methionyl-[protein] + a quinone + H2O = L-methionyl-(R)-S-oxide-[protein] + a quinol. Part of the MsrPQ system that repairs oxidized periplasmic proteins containing methionine sulfoxide residues (Met-O), using respiratory chain electrons. Thus protects these proteins from oxidative-stress damage caused by reactive species of oxygen and chlorine generated by the host defense mechanisms. MsrPQ is essential for the maintenance of envelope integrity under bleach stress, rescuing a wide series of structurally unrelated periplasmic proteins from methionine oxidation. The catalytic subunit MsrP is non-stereospecific, being able to reduce both (R-) and (S-) diastereoisomers of methionine sulfoxide. This is Protein-methionine-sulfoxide reductase catalytic subunit MsrP from Actinobacillus pleuropneumoniae serotype 5b (strain L20).